Here is a 176-residue protein sequence, read N- to C-terminus: Dual-action ribosomal maturation protein DarP (176 aa).

The protein belongs to the DarP family.

Its subcellular location is the cytoplasm. In terms of biological role, member of a network of 50S ribosomal subunit biogenesis factors which assembles along the 30S-50S interface, preventing incorrect 23S rRNA structures from forming. Promotes peptidyl transferase center (PTC) maturation. In Haemophilus ducreyi (strain 35000HP / ATCC 700724), this protein is Dual-action ribosomal maturation protein DarP.